Reading from the N-terminus, the 495-residue chain is ATP synthase subunit beta, chloroplastic (495 aa).

An ATP-binding site is contributed by 172–179 (GGAGVGKT).

The protein belongs to the ATPase alpha/beta chains family. F-type ATPases have 2 components, CF(1) - the catalytic core - and CF(0) - the membrane proton channel. CF(1) has five subunits: alpha(3), beta(3), gamma(1), delta(1), epsilon(1). CF(0) has four main subunits: a(1), b(1), b'(1) and c(9-12).

It is found in the plastid. Its subcellular location is the chloroplast thylakoid membrane. It carries out the reaction ATP + H2O + 4 H(+)(in) = ADP + phosphate + 5 H(+)(out). Its function is as follows. Produces ATP from ADP in the presence of a proton gradient across the membrane. The catalytic sites are hosted primarily by the beta subunits. The protein is ATP synthase subunit beta, chloroplastic of Beaucarnea recurvata (Elephant-foot tree).